We begin with the raw amino-acid sequence, 240 residues long: MORN repeat-containing protein 3 (240 aa).

The interval 6–35 (CPKKSESLWKGWDRKAQKNGLRRQVYAVNG) is interaction with MDM2. MORN repeat units follow at residues 38-60 (YVGE…KNGA), 62-84 (YEGD…DQQT), 91-113 (YSGW…PKEY), 114-136 (YEGE…NGDI), 137-159 (YEGQ…NGNR), 160-182 (YEGC…DHGQ), and 184-205 (FEGF…GRDE). The segment at 76–100 (TLSLPDQQTGKCRRVYSGWWKGDKK) is interaction with SIRT1. Residues 206–240 (APEPTQFPIPEVKILDPDGVLAQALAMFKKTEEGD) are interaction with TP53.

Interacts with MEIG1. Interacts with TP53, MDM2 and SIRT1; the interactions mediate post-transcriptional modifications of TP53 by MDM2 and SIRT1.

Its subcellular location is the cytoplasmic vesicle. The protein resides in the secretory vesicle. The protein localises to the acrosome. Functionally, assembles a suppression complex (suppresome) by tethering SIRT1 and MDM2 to regulate composite modifications of p53/TP53. Confers both deacetylation-mediated functional inactivation, by SIRT1, and ubiquitination-dependent degradation, by MDM2, of p53/TP53, promoting a proliferative and cell survival behaviors. May play a role in the regulation of spermatogenesis. The protein is MORN repeat-containing protein 3 (MORN3) of Macaca fascicularis (Crab-eating macaque).